The following is a 680-amino-acid chain: Pescadillo homolog (680 aa).

The tract at residues 310-330 (LDQAKDEQTAETTEESSDTID) is disordered. The region spanning 351-470 (QAGSLFAPFT…KLVRPDLYSP (120 aa)) is the BRCT domain. The interval 472–680 (ATLPPHLSPW…RRKLEKGAAK (209 aa)) is disordered. Positions 496–523 (AEQEEEGEAEMAEDSDEEMEEAADEKSK) form a coiled coil. Acidic residues predominate over residues 497–518 (EQEEEGEAEMAEDSDEEMEEAA). Residues 519 to 529 (DEKSKTASKDE) are compositionally biased toward basic and acidic residues. 2 stretches are compositionally biased toward acidic residues: residues 530 to 543 (AESE…DESV) and 551 to 585 (GTDD…DEEE). Over residues 586–596 (VARTQHQKELE) the composition is skewed to basic and acidic residues. Residues 613–680 (ASKKKASQAK…RRKLEKGAAK (68 aa)) are a coiled coil. Residues 616–628 (KKASQAKKIAAKK) show a composition bias toward basic residues. Residues 629 to 639 (RKEEEEIERQK) show a composition bias toward basic and acidic residues.

Belongs to the pescadillo family. In terms of assembly, component of the NOP7 complex, composed of erb1, nop7 and ytm1. The complex is held together by erb1, which interacts with nop7 via its N-terminal domain and with ytm1 via a high-affinity interaction between the seven-bladed beta-propeller domains of the 2 proteins. The NOP7 complex associates with the 66S pre-ribosome.

Its subcellular location is the nucleus. The protein resides in the nucleolus. The protein localises to the nucleoplasm. Functionally, component of the NOP7 complex, which is required for maturation of the 25S and 5.8S ribosomal RNAs and formation of the 60S ribosome. This Aspergillus clavatus (strain ATCC 1007 / CBS 513.65 / DSM 816 / NCTC 3887 / NRRL 1 / QM 1276 / 107) protein is Pescadillo homolog (nop7).